The chain runs to 178 residues: MHSSALLCCLVLLTGVRASPGQGTQSENSCTRFPGNLPHMLRDLRDAFSRVKTFFQMKDQLDNILLKESLLEDFKGYLGCQALSEMIQFYLEEVMPQAENHDPDIKEHVNSLGENLKTLRLRLRRCHRFLPCENKSKAVEQVMNAFSKLQEKGVYKAMSEFDIFINYIEAYMTMKIQN.

Residues 1–18 (MHSSALLCCLVLLTGVRA) form the signal peptide. 2 disulfide bridges follow: Cys-30–Cys-126 and Cys-80–Cys-132. Asn-134 is a glycosylation site (N-linked (GlcNAc...) asparagine).

The protein belongs to the IL-10 family. As to quaternary structure, homodimer. Interacts with IL10RA and IL10RB.

The protein resides in the secreted. In terms of biological role, major immune regulatory cytokine that acts on many cells of the immune system where it has profound anti-inflammatory functions, limiting excessive tissue disruption caused by inflammation. Mechanistically, IL10 binds to its heterotetrameric receptor comprising IL10RA and IL10RB leading to JAK1 and STAT2-mediated phosphorylation of STAT3. In turn, STAT3 translocates to the nucleus where it drives expression of anti-inflammatory mediators. Targets antigen-presenting cells (APCs) such as macrophages and monocytes and inhibits their release of pro-inflammatory cytokines including granulocyte-macrophage colony-stimulating factor /GM-CSF, granulocyte colony-stimulating factor/G-CSF, IL-1 alpha, IL-1 beta, IL-6, IL-8 and TNF-alpha. Also interferes with antigen presentation by reducing the expression of MHC-class II and co-stimulatory molecules, thereby inhibiting their ability to induce T cell activation. In addition, controls the inflammatory response of macrophages by reprogramming essential metabolic pathways including mTOR signaling. The polypeptide is Interleukin-10 (IL10) (Macaca nemestrina (Pig-tailed macaque)).